The following is a 45-amino-acid chain: Protein PsbN (45 aa).

The chain crosses the membrane as a helical span at residues 12-30 (FLSRSLVSFTGYALYTAFG).

The protein belongs to the PsbN family.

It localises to the plastid. Its subcellular location is the chloroplast thylakoid membrane. In terms of biological role, may play a role in photosystem I and II biogenesis. This chain is Protein PsbN, found in Adiantum capillus-veneris (Maidenhair fern).